A 249-amino-acid chain; its full sequence is MAPSRKFFVGGNWKMNGRKQSLGELIGTLNAAKVPADTEVVCAPPTAYIDFARQKLDPKIAVAAQNCYKVTNGAFTGEISPGMIKDYGATWVVLGHSERRHVFGESDELIGQKVAHALAEGLGVIACIGEKLDEREAGITEKVVFEQTKVIADNVKDWSKVVLAYEPVWAIGTGKTATPQQAQEVHEKLRGWLKSNVSDAVAQSTRIIYGGSVTGATCKELASQPDVDGFLVGGASLKPEFVDIINAKQ.

Substrate contacts are provided by Asn-12 and Lys-14. Lys-14 carries the N6-acetyllysine modification. Position 68 is a 3'-nitrotyrosine (Tyr-68). Ser-80 carries the post-translational modification Phosphoserine. The active-site Electrophile is His-96. At Ser-106 the chain carries Phosphoserine. Residue Lys-142 forms a Glycyl lysine isopeptide (Lys-Gly) (interchain with G-Cter in SUMO1) linkage. Lys-149 bears the N6-succinyllysine mark. Lys-156 carries the N6-acetyllysine; alternate modification. Lys-156 is modified (N6-succinyllysine; alternate). The residue at position 159 (Ser-159) is a Phosphoserine. Glu-166 (proton acceptor) is an active-site residue. A Phosphothreonine modification is found at Thr-173. Lys-194 carries the N6-acetyllysine; alternate modification. Lys-194 carries the N6-succinyllysine; alternate modification. Lys-194 bears the N6-methyllysine; alternate mark. Position 198 is a phosphoserine (Ser-198). Tyr-209 carries the post-translational modification 3'-nitrotyrosine. A Phosphoserine modification is found at Ser-212. Residue Thr-214 is modified to Phosphothreonine. Phosphoserine is present on Ser-223. N6-acetyllysine is present on Lys-238.

This sequence belongs to the triosephosphate isomerase family. As to quaternary structure, homodimer.

Its subcellular location is the cytoplasm. The catalysed reaction is dihydroxyacetone phosphate = methylglyoxal + phosphate. It catalyses the reaction D-glyceraldehyde 3-phosphate = dihydroxyacetone phosphate. Its pathway is carbohydrate degradation; glycolysis; D-glyceraldehyde 3-phosphate from glycerone phosphate: step 1/1. It participates in carbohydrate biosynthesis; gluconeogenesis. Functionally, triosephosphate isomerase is an extremely efficient metabolic enzyme that catalyzes the interconversion between dihydroxyacetone phosphate (DHAP) and D-glyceraldehyde-3-phosphate (G3P) in glycolysis and gluconeogenesis. In terms of biological role, it is also responsible for the non-negligible production of methylglyoxal a reactive cytotoxic side-product that modifies and can alter proteins, DNA and lipids. The sequence is that of Triosephosphate isomerase (TPI1) from Pongo abelii (Sumatran orangutan).